Reading from the N-terminus, the 94-residue chain is HssA/B-like protein 51 (94 aa).

Positions 1–25 (MTLFSSISSISNPMTNSKSRISSFG) are disordered.

It belongs to the hssA/B family.

This is HssA/B-like protein 51 (hssl51) from Dictyostelium discoideum (Social amoeba).